A 290-amino-acid chain; its full sequence is MDIEAYFERIGYKNSVNKLDLATLTEVLQHQMRAVPFENLNMHCGEAMHLDLQDIFDHIVRKKRGGWCLQVNHLLYWALTKMGFETTMLGGYVYITPVSKYSSEMVHLLVQVTISDRKYIVDSAYGGSYQMWEPLELTSGKDQPQVPAIFLLTEENGTWYLDQIRREQYVPNEEFVNSDLLEKNKYRKIYSFTLEPRVIEDFEYVNSYLQTSPASVFVSTSFCSLQTSEGVHCLVGSTFTSRRFSYKDDVDLVEFKYVNEEEIEDVLKTAFGISLERKFVPKHGELVFTI.

The residue at position 1 (methionine 1) is an N-acetylmethionine. The Acyl-thioester intermediate role is filled by cysteine 68. A CoA-binding site is contributed by serine 103. 106 to 107 contacts substrate; sequence VH. Active-site residues include histidine 107 and aspartate 122. CoA is bound at residue tyrosine 208.

It belongs to the arylamine N-acetyltransferase family.

The protein localises to the cytoplasm. It carries out the reaction an arylamine + acetyl-CoA = an N-acetylarylamine + CoA. Participates in the detoxification of a plethora of hydrazine and arylamine drugs. Isoniazid, 2-aminofluorene and anisidine are preferred substrates for NAT-1. No activity with p-aminobenzoic acid (PABA) nor SMZ. The sequence is that of Arylamine N-acetyltransferase 1 (Nat1) from Mus musculus (Mouse).